We begin with the raw amino-acid sequence, 110 residues long: Small ribosomal subunit protein bS16 (110 aa).

The tract at residues 84 to 110 (KRAPRNNPEKAVPRKERKAAAEAAAKA) is disordered. Residues 90 to 103 (NPEKAVPRKERKAA) show a composition bias toward basic and acidic residues.

The protein belongs to the bacterial ribosomal protein bS16 family.

The protein is Small ribosomal subunit protein bS16 of Afipia carboxidovorans (strain ATCC 49405 / DSM 1227 / KCTC 32145 / OM5) (Oligotropha carboxidovorans).